The sequence spans 75 residues: Stewaprin-a (75 aa).

A signal peptide spans Met-1–Gly-24. Positions His-27–Ile-72 constitute a WAP domain. Disulfide bonds link Cys-34/Cys-60, Cys-43/Cys-64, Cys-47/Cys-59, and Cys-53/Cys-68.

Belongs to the venom waprin family. In terms of tissue distribution, expressed by the venom gland.

The protein localises to the secreted. Damages membranes of susceptible bacteria. Has no hemolytic activity. Not toxic to mice. Does not inhibit the proteinases elastase and cathepsin G. The chain is Stewaprin-a from Hoplocephalus stephensii (Stephens's banded snake).